A 266-amino-acid chain; its full sequence is Amylovoran biosynthesis glycosyltransferase AmsE (266 aa).

Belongs to the glycosyltransferase 2 family.

Its pathway is glycan metabolism; exopolysaccharide biosynthesis. In terms of biological role, involved in the biosynthesis of amylovoran which functions as a virulence factor. In Erwinia amylovora (Fire blight bacteria), this protein is Amylovoran biosynthesis glycosyltransferase AmsE (amsE).